Reading from the N-terminus, the 452-residue chain is Probable E3 ubiquitin-protein ligase ARI15 (452 aa).

The segment at 22-256 (SRVYCGICSN…GTSGSCLAPA (235 aa)) is TRIAD supradomain. 24 residues coordinate Zn(2+): Cys-26, Cys-29, Cys-54, His-56, Cys-59, Cys-62, Cys-83, Cys-88, Cys-128, Cys-133, Cys-154, Cys-156, Cys-161, Cys-164, His-169, Cys-174, Cys-208, Cys-211, Cys-229, Cys-231, Cys-236, Cys-239, His-246, and Cys-252. The segment at 26 to 88 (CGICSNIGDD…TAISCPDRDC (63 aa)) adopts an RING-type 1 zinc-finger fold. The IBR-type zinc finger occupies 106–174 (AMYELYILKS…MLESHRPVTC (69 aa)). The RING-type 2; atypical zinc finger occupies 208-239 (CPHCFIPVEIDGERPWAQFLTCVCSGRFCWKC). Residues 414–445 (NYGGPYWLCDRCTYGNSWFQRACKMCCDPTAS) form a RanBP2-type zinc finger.

It belongs to the RBR family. Ariadne subfamily. Requires Zn(2+) as cofactor. As to expression, ubiquitous.

It catalyses the reaction [E2 ubiquitin-conjugating enzyme]-S-ubiquitinyl-L-cysteine + [acceptor protein]-L-lysine = [E2 ubiquitin-conjugating enzyme]-L-cysteine + [acceptor protein]-N(6)-ubiquitinyl-L-lysine.. The protein operates within protein modification; protein ubiquitination. In terms of biological role, might act as an E3 ubiquitin-protein ligase, or as part of E3 complex, which accepts ubiquitin from specific E2 ubiquitin-conjugating enzymes and then transfers it to substrates. This is Probable E3 ubiquitin-protein ligase ARI15 (ARI15) from Arabidopsis thaliana (Mouse-ear cress).